The chain runs to 700 residues: Polyribonucleotide nucleotidyltransferase (700 aa).

2 residues coordinate Mg(2+): aspartate 484 and aspartate 490. Residues 551–610 (PRVIRMVVDPEKIREIIGPGGKTISKIIAETGVKIDIEEDGRLYITASDLRSGERAKQMI) enclose the KH domain. Positions 620 to 688 (GEIYLGKVLR…KLGRISLSRK (69 aa)) constitute an S1 motif domain.

This sequence belongs to the polyribonucleotide nucleotidyltransferase family. It depends on Mg(2+) as a cofactor.

It is found in the cytoplasm. The catalysed reaction is RNA(n+1) + phosphate = RNA(n) + a ribonucleoside 5'-diphosphate. Functionally, involved in mRNA degradation. Catalyzes the phosphorolysis of single-stranded polyribonucleotides processively in the 3'- to 5'-direction. The chain is Polyribonucleotide nucleotidyltransferase from Thermoanaerobacter pseudethanolicus (strain ATCC 33223 / 39E) (Clostridium thermohydrosulfuricum).